Here is a 252-residue protein sequence, read N- to C-terminus: Imidazole glycerol phosphate synthase subunit HisF (252 aa).

Catalysis depends on residues D11 and D130.

The protein belongs to the HisA/HisF family. As to quaternary structure, heterodimer of HisH and HisF.

The protein localises to the cytoplasm. It carries out the reaction 5-[(5-phospho-1-deoxy-D-ribulos-1-ylimino)methylamino]-1-(5-phospho-beta-D-ribosyl)imidazole-4-carboxamide + L-glutamine = D-erythro-1-(imidazol-4-yl)glycerol 3-phosphate + 5-amino-1-(5-phospho-beta-D-ribosyl)imidazole-4-carboxamide + L-glutamate + H(+). It participates in amino-acid biosynthesis; L-histidine biosynthesis; L-histidine from 5-phospho-alpha-D-ribose 1-diphosphate: step 5/9. Its function is as follows. IGPS catalyzes the conversion of PRFAR and glutamine to IGP, AICAR and glutamate. The HisF subunit catalyzes the cyclization activity that produces IGP and AICAR from PRFAR using the ammonia provided by the HisH subunit. This is Imidazole glycerol phosphate synthase subunit HisF from Staphylococcus aureus (strain MRSA252).